Reading from the N-terminus, the 163-residue chain is Neurotrophin-3 (163 aa).

A signal peptide spans 1–3; that stretch reads IQS. Residues 4–119 constitute a propeptide that is removed on maturation; sequence TSMDQGILTE…VLNRTSRRKR (116 aa). N-linked (GlcNAc...) asparagine glycosylation occurs at asparagine 112. The tract at residues 112–132 is disordered; that stretch reads NRTSRRKREGKSHRGEYSVCD. A compositionally biased stretch (basic and acidic residues) spans 123–132; it reads SHRGEYSVCD.

It belongs to the NGF-beta family.

It localises to the secreted. Functionally, seems to promote the survival of visceral and proprioceptive sensory neurons. This is Neurotrophin-3 (NTF3) from Exiliboa placata (Oaxacan dwarf boa).